A 334-amino-acid polypeptide reads, in one-letter code: Nucleoid-associated protein SG1574 (334 aa).

It belongs to the YejK family.

The protein resides in the cytoplasm. Its subcellular location is the nucleoid. This chain is Nucleoid-associated protein SG1574, found in Sodalis glossinidius (strain morsitans).